The sequence spans 72 residues: Translation initiation factor IF-1 (72 aa).

Residues 1–72 (MSKEEAIEVE…TRGRITYRAK (72 aa)) enclose the S1-like domain.

Belongs to the IF-1 family. In terms of assembly, component of the 30S ribosomal translation pre-initiation complex which assembles on the 30S ribosome in the order IF-2 and IF-3, IF-1 and N-formylmethionyl-tRNA(fMet); mRNA recruitment can occur at any time during PIC assembly.

The protein localises to the cytoplasm. In terms of biological role, one of the essential components for the initiation of protein synthesis. Stabilizes the binding of IF-2 and IF-3 on the 30S subunit to which N-formylmethionyl-tRNA(fMet) subsequently binds. Helps modulate mRNA selection, yielding the 30S pre-initiation complex (PIC). Upon addition of the 50S ribosomal subunit IF-1, IF-2 and IF-3 are released leaving the mature 70S translation initiation complex. The chain is Translation initiation factor IF-1 from Geobacter sulfurreducens (strain ATCC 51573 / DSM 12127 / PCA).